The sequence spans 607 residues: Large ribosomal subunit assembly factor BipA (607 aa).

Residues 3–198 (HSIRNIAIIA…SIIKYAPAPN (196 aa)) enclose the tr-type G domain. Residues 15 to 20 (DHGKTT) and 128 to 131 (NKID) contribute to the GTP site.

Belongs to the TRAFAC class translation factor GTPase superfamily. Classic translation factor GTPase family. BipA subfamily. In terms of assembly, monomer.

It localises to the cytoplasm. It carries out the reaction GTP + H2O = GDP + phosphate + H(+). Functionally, a 50S ribosomal subunit assembly protein with GTPase activity, required for 50S subunit assembly at low temperatures, may also play a role in translation. Binds GTP and analogs. Binds the 70S ribosome between the 30S and 50S subunits, in a similar position as ribosome-bound EF-G; it contacts a number of ribosomal proteins, both rRNAs and the A-site tRNA. This Buchnera aphidicola subsp. Acyrthosiphon pisum (strain APS) (Acyrthosiphon pisum symbiotic bacterium) protein is Large ribosomal subunit assembly factor BipA.